The primary structure comprises 89 residues: Putative antitoxin VapB42 (89 aa).

Functionally, possibly the antitoxin component of a type II toxin-antitoxin (TA) system. Its cognate toxin is VapC42 (Potential). The protein is Putative antitoxin VapB42 (vapB42) of Mycobacterium tuberculosis (strain CDC 1551 / Oshkosh).